The sequence spans 320 residues: Olfactory receptor 10J1 (320 aa).

At 1–36 the chain is on the extracellular side; the sequence is MLLCFRFGNQSMKRENFTLITDFVFQGFSSFHEQQI. N-linked (GlcNAc...) asparagine glycosylation is found at asparagine 9 and asparagine 16. The chain crosses the membrane as a helical span at residues 37-57; that stretch reads TLFGVFLALYILTLAGNIIIV. Over 58 to 65 the chain is Cytoplasmic; that stretch reads TIIRMDLH. The helical transmembrane segment at 66–86 threads the bilayer; it reads LHTPMYFFLSMLSTSETVYTL. Over 87–110 the chain is Extracellular; the sequence is VILPRMLSSLVGMSQPISLAGCAT. A disulfide bridge links cysteine 108 with cysteine 199. Residues 111-131 form a helical membrane-spanning segment; the sequence is QMFFFVTFGITNCFLLTAMGY. The Cytoplasmic portion of the chain corresponds to 132-150; that stretch reads DRYVAICNPLRYMVIMNKR. Residues 151-171 form a helical membrane-spanning segment; it reads LRIQLVLGACSIGLIVAITQV. Over 172-207 the chain is Extracellular; sequence TSVFRLPFCARKVPHFFCDIRPVMKLSCIDTTVNEI. The helical transmembrane segment at 208–227 threads the bilayer; it reads LTLIISVLVLVVPMGLVFIS. The Cytoplasmic segment spans residues 228–247; sequence YVLIISTILKIASVEGRKKA. A helical transmembrane segment spans residues 248-268; sequence FATCASHLTVVIVHYSCASIA. Residues 269–281 are Extracellular-facing; it reads YLKPKSENTREHD. The helical transmembrane segment at 282 to 302 threads the bilayer; that stretch reads QLISVTYTVITPLLNPVVYTL. At 303 to 320 the chain is on the cytoplasmic side; it reads RNKEVKDALCRAVGGKFS.

The protein belongs to the G-protein coupled receptor 1 family.

The protein resides in the cell membrane. Its function is as follows. Odorant receptor. This Homo sapiens (Human) protein is Olfactory receptor 10J1 (OR10J1).